The primary structure comprises 536 residues: Probable E3 ubiquitin-protein ligase ARI13 (536 aa).

A TRIAD supradomain region spans residues 83 to 328 (KISSCGICFK…GFYKFCNVSM (246 aa)). Residues Cys87, Cys90, Cys106, His108, Cys111, Cys114, Cys135, Cys140, Cys180, Cys185, Cys210, Cys212, Cys217, Cys220, His225, Cys230, Cys277, Cys280, Cys297, Cys299, Cys304, Cys307, His314, and Cys324 each contribute to the Zn(2+) site. An RING-type 1 zinc finger spans residues 87 to 140 (CGICFKTCDDGDYLISTPFCSHMFCKSCWRKYLEKNFYLVEKTQTRISCPHGAC). Residues 158–230 (EMYVEYILRS…MLESHKPVTC (73 aa)) form an IBR-type zinc finger. The RING-type 2; atypical zinc-finger motif lies at 277 to 307 (CPHCLRPADLGTKQYLRFLTCACNGRFCWKC). A RanBP2-type zinc finger spans residues 495–526 (DYGGLFWLCDRCTYGNTWFHKECLMCSDDIAA).

The protein belongs to the RBR family. Ariadne subfamily. Zn(2+) is required as a cofactor.

It catalyses the reaction [E2 ubiquitin-conjugating enzyme]-S-ubiquitinyl-L-cysteine + [acceptor protein]-L-lysine = [E2 ubiquitin-conjugating enzyme]-L-cysteine + [acceptor protein]-N(6)-ubiquitinyl-L-lysine.. Its pathway is protein modification; protein ubiquitination. In terms of biological role, might act as an E3 ubiquitin-protein ligase, or as part of E3 complex, which accepts ubiquitin from specific E2 ubiquitin-conjugating enzymes and then transfers it to substrates. The protein is Probable E3 ubiquitin-protein ligase ARI13 (ARI13) of Arabidopsis thaliana (Mouse-ear cress).